The chain runs to 126 residues: Acidic phospholipase A2 S1E6-a (126 aa).

The N-terminal stretch at 1–3 is a signal peptide; the sequence is VEG. 7 disulfides stabilise this stretch: C29–C119, C31–C47, C46–C98, C52–C126, C53–C91, C60–C84, and C78–C89. Y30, G32, and G34 together coordinate Ca(2+). H50 is a catalytic residue. Residue D51 participates in Ca(2+) binding. Residue D92 is part of the active site.

Homodimer. It depends on Ca(2+) as a cofactor. As to expression, expressed by the venom gland.

Its subcellular location is the secreted. The catalysed reaction is a 1,2-diacyl-sn-glycero-3-phosphocholine + H2O = a 1-acyl-sn-glycero-3-phosphocholine + a fatty acid + H(+). Its function is as follows. Snake venom phospholipase A2 (PLA2) that inhibits ADP-induced platelet aggregation. PLA2 catalyzes the calcium-dependent hydrolysis of the 2-acyl groups in 3-sn-phosphoglycerides. This Calloselasma rhodostoma (Malayan pit viper) protein is Acidic phospholipase A2 S1E6-a.